A 656-amino-acid chain; its full sequence is Acyl-CoA-binding domain-containing protein 6 (656 aa).

In terms of domain architecture, ACB spans 8–102 (YPDRFYAAAA…LEEEDPGWYS (95 aa)). Residues 44–48 (YGLYQ) and lysine 70 contribute to the an acyl-CoA site. Residues 129 to 148 (ASTNGTSVPEPKTISENGSS) form a disordered region. Kelch repeat units lie at residues 194-241 (KMYI…AQVS), 254-304 (KFFS…LVGT), 305-354 (TLVL…CHAD), 356-405 (YLLI…TVGE), 406-454 (NWYI…LVHS), and 461-507 (YLIS…EPEV). The stretch at 527–636 (LKKDDANELL…EQAALEAKQR (110 aa)) forms a coiled coil. The interval 627–656 (EQAALEAKQRQSSSGMWGWLVGTPPDKSES) is disordered.

This sequence belongs to the ACBP family. As to expression, highly expressed in leaves. Expressed in roots and seeds.

It is found in the peroxisome. Its function is as follows. Binds medium- and long-chain acyl-CoA esters with high affinity. Can interact in vitro with linoleoyl-CoA and linolenoyl-CoA. Binds phosphatidic acid (PA) and phosphatidylcholine (PC) in vitro. May play a role in the biosynthesis of phospholipids. May be involved in lipid degradation via peroxisomal beta-oxydation. This Oryza sativa subsp. japonica (Rice) protein is Acyl-CoA-binding domain-containing protein 6.